Consider the following 283-residue polypeptide: uncharacterized protein (283 aa).

5 consecutive transmembrane segments (helical) span residues 8–28 (LILSIVGNILLGLIKIIIGYV), 38–58 (GIHSLSDVITSIIGIIGVKIA), 73–93 (FECLFSFFIGLALFFTAYEIG), 100–120 (IIYGEVIEVNAIMVGVAILSI), and 175–195 (AIAGIIVALMIAKVAFDICLT).

This sequence belongs to the cation diffusion facilitator (CDF) transporter (TC 2.A.4) family.

It is found in the cell membrane. This is an uncharacterized protein from Methanocaldococcus jannaschii (strain ATCC 43067 / DSM 2661 / JAL-1 / JCM 10045 / NBRC 100440) (Methanococcus jannaschii).